Here is a 175-residue protein sequence, read N- to C-terminus: Peptide deformylase 1 (175 aa).

Fe cation is bound by residues Cys99 and His141. Glu142 is an active-site residue. Fe cation is bound at residue His145.

The protein belongs to the polypeptide deformylase family. It depends on Fe(2+) as a cofactor.

It carries out the reaction N-terminal N-formyl-L-methionyl-[peptide] + H2O = N-terminal L-methionyl-[peptide] + formate. Its function is as follows. Removes the formyl group from the N-terminal Met of newly synthesized proteins. Requires at least a dipeptide for an efficient rate of reaction. N-terminal L-methionine is a prerequisite for activity but the enzyme has broad specificity at other positions. The polypeptide is Peptide deformylase 1 (Rickettsia conorii (strain ATCC VR-613 / Malish 7)).